The sequence spans 669 residues: uncharacterized protein (669 aa).

6 helical membrane-spanning segments follow: residues 39–61, 124–146, 153–175, 190–212, 221–243, and 263–285; these read LCPL…GTSW, ISLW…LISI, GIIY…YALG, GLAF…FFGV, FAPG…QTAL, and IAAG…IRYL. 2 consecutive RCK C-terminal domains span residues 316-397 and 398-483; these read AGSL…KLIG and KESD…LGGR. The next 5 helical transmembrane spans lie at 484 to 506, 516 to 538, 558 to 580, 585 to 607, and 645 to 667; these read PILN…GYIF, IPFA…YWRS, IGLN…ESFH, IWVA…VVGI, and VPYP…FAML.

This sequence belongs to the AAE transporter (TC 2.A.81) family.

The protein localises to the cell membrane. This is an uncharacterized protein from Desulfotalea psychrophila (strain LSv54 / DSM 12343).